The primary structure comprises 689 residues: Glycine--tRNA ligase beta subunit (689 aa).

Belongs to the class-II aminoacyl-tRNA synthetase family. In terms of assembly, tetramer of two alpha and two beta subunits.

The protein resides in the cytoplasm. The enzyme catalyses tRNA(Gly) + glycine + ATP = glycyl-tRNA(Gly) + AMP + diphosphate. The sequence is that of Glycine--tRNA ligase beta subunit from Desulforapulum autotrophicum (strain ATCC 43914 / DSM 3382 / VKM B-1955 / HRM2) (Desulfobacterium autotrophicum).